The primary structure comprises 522 residues: Protein nucleotidyltransferase YdiU (522 aa).

Positions 109, 111, 112, 132, 144, 145, 195, and 202 each coordinate ATP. The active-site Proton acceptor is the Asp-271. Positions 272 and 281 each coordinate Mg(2+). ATP is bound at residue Asp-281.

The protein belongs to the SELO family. Mg(2+) serves as cofactor. It depends on Mn(2+) as a cofactor.

The enzyme catalyses L-seryl-[protein] + ATP = 3-O-(5'-adenylyl)-L-seryl-[protein] + diphosphate. The catalysed reaction is L-threonyl-[protein] + ATP = 3-O-(5'-adenylyl)-L-threonyl-[protein] + diphosphate. It catalyses the reaction L-tyrosyl-[protein] + ATP = O-(5'-adenylyl)-L-tyrosyl-[protein] + diphosphate. It carries out the reaction L-histidyl-[protein] + UTP = N(tele)-(5'-uridylyl)-L-histidyl-[protein] + diphosphate. The enzyme catalyses L-seryl-[protein] + UTP = O-(5'-uridylyl)-L-seryl-[protein] + diphosphate. The catalysed reaction is L-tyrosyl-[protein] + UTP = O-(5'-uridylyl)-L-tyrosyl-[protein] + diphosphate. Its function is as follows. Nucleotidyltransferase involved in the post-translational modification of proteins. It can catalyze the addition of adenosine monophosphate (AMP) or uridine monophosphate (UMP) to a protein, resulting in modifications known as AMPylation and UMPylation. This is Protein nucleotidyltransferase YdiU from Burkholderia ambifaria (strain ATCC BAA-244 / DSM 16087 / CCUG 44356 / LMG 19182 / AMMD) (Burkholderia cepacia (strain AMMD)).